Here is a 361-residue protein sequence, read N- to C-terminus: Glutamate 5-kinase (361 aa).

An ATP-binding site is contributed by Lys-14. Residues Ser-54, Asp-141, and Asn-153 each coordinate substrate. One can recognise a PUA domain in the interval 277–355 (KGAVIINQGA…KGLKPVIHYD (79 aa)).

The protein belongs to the glutamate 5-kinase family.

The protein localises to the cytoplasm. It carries out the reaction L-glutamate + ATP = L-glutamyl 5-phosphate + ADP. It functions in the pathway amino-acid biosynthesis; L-proline biosynthesis; L-glutamate 5-semialdehyde from L-glutamate: step 1/2. Its function is as follows. Catalyzes the transfer of a phosphate group to glutamate to form L-glutamate 5-phosphate. The sequence is that of Glutamate 5-kinase from Chlorobaculum tepidum (strain ATCC 49652 / DSM 12025 / NBRC 103806 / TLS) (Chlorobium tepidum).